We begin with the raw amino-acid sequence, 336 residues long: tRNA N6-adenosine threonylcarbamoyltransferase (336 aa).

His-114 and His-118 together coordinate Fe cation. Substrate contacts are provided by residues 136–140 (LVSGG), Asp-169, Gly-182, Asp-186, and Asn-275. Fe cation is bound at residue Asp-301.

This sequence belongs to the KAE1 / TsaD family. The cofactor is Fe(2+).

Its subcellular location is the cytoplasm. The catalysed reaction is L-threonylcarbamoyladenylate + adenosine(37) in tRNA = N(6)-L-threonylcarbamoyladenosine(37) in tRNA + AMP + H(+). In terms of biological role, required for the formation of a threonylcarbamoyl group on adenosine at position 37 (t(6)A37) in tRNAs that read codons beginning with adenine. Is involved in the transfer of the threonylcarbamoyl moiety of threonylcarbamoyl-AMP (TC-AMP) to the N6 group of A37, together with TsaE and TsaB. TsaD likely plays a direct catalytic role in this reaction. The chain is tRNA N6-adenosine threonylcarbamoyltransferase from Streptococcus mutans serotype c (strain ATCC 700610 / UA159).